The sequence spans 142 residues: COA8 family protein Y39B6A.34, mitochondrial (142 aa).

Belongs to the COA8 family.

It localises to the mitochondrion inner membrane. In terms of biological role, may be required for cytochrome c complex (COX) assembly and function, COX being the terminal component of the mitochondrial respiratory chain. The chain is COA8 family protein Y39B6A.34, mitochondrial from Caenorhabditis elegans.